The sequence spans 229 residues: MENNHHLAKDSLDELNPKRGKGEHETQVSQYTVVEEATIPQSLVKTSRPADHKVMEASKVADTRTAWSTKIPAVLLPVFVINIALFKYLVFANFSTKDRVLFGLGNGGINIFSMWLLLATYETWFRSIKEVIVACGAGIRSFPQKRGVNMLYAILKLTFVNAFAIPLLMFFRSHFEQWRLGCPLVERVIGVMLNVAYFIIEIENPGLFTRVFNKYCDCLFAIRDILNRN.

Positions 1–26 (MENNHHLAKDSLDELNPKRGKGEHET) are enriched in basic and acidic residues. The segment at 1–27 (MENNHHLAKDSLDELNPKRGKGEHETQ) is disordered. Helical transmembrane passes span 71-91 (IPAV…YLVF), 100-120 (VLFG…LLAT), 151-171 (LYAI…LMFF), and 188-208 (VIGV…PGLF).

The protein belongs to the WTF family.

It localises to the endoplasmic reticulum membrane. Functionally, may act in meiotic drive. This chain is Wtf element wtf14, found in Schizosaccharomyces pombe (strain 972 / ATCC 24843) (Fission yeast).